The primary structure comprises 212 residues: Ferric nitrobindin-like protein (212 aa).

A compositionally biased stretch (basic and acidic residues) spans 1 to 11; that stretch reads MTSSDQPERGS. Positions 1 to 36 are disordered; it reads MTSSDQPERGSGDAAVQAAAERAEQTRGRNVPQFDD. Residues 64–70 carry the GXWXGXG motif; it reads GVWRGDG.

This sequence belongs to the nitrobindin family.

This Saccharopolyspora erythraea (strain ATCC 11635 / DSM 40517 / JCM 4748 / NBRC 13426 / NCIMB 8594 / NRRL 2338) protein is Ferric nitrobindin-like protein.